Reading from the N-terminus, the 203-residue chain is ATP-dependent dethiobiotin synthetase BioD (203 aa).

11–16 provides a ligand contact to ATP; the sequence is NVGKTI. Residue Thr15 coordinates Mg(2+). Lys31 is an active-site residue. Substrate is bound at residue Thr35. Residues Asp42 and 94–97 contribute to the ATP site; that span reads EGAG. Mg(2+)-binding residues include Asp42 and Glu94.

This sequence belongs to the dethiobiotin synthetase family. Homodimer. Requires Mg(2+) as cofactor.

It is found in the cytoplasm. The enzyme catalyses (7R,8S)-7,8-diammoniononanoate + CO2 + ATP = (4R,5S)-dethiobiotin + ADP + phosphate + 3 H(+). It functions in the pathway cofactor biosynthesis; biotin biosynthesis; biotin from 7,8-diaminononanoate: step 1/2. Catalyzes a mechanistically unusual reaction, the ATP-dependent insertion of CO2 between the N7 and N8 nitrogen atoms of 7,8-diaminopelargonic acid (DAPA, also called 7,8-diammoniononanoate) to form a ureido ring. This is ATP-dependent dethiobiotin synthetase BioD from Lawsonia intracellularis (strain PHE/MN1-00).